The primary structure comprises 359 residues: Molybdenum import ATP-binding protein ModC (359 aa).

The ABC transporter domain maps to 1-233 (MSGLTVSIRG…IDAESEGGGV (233 aa)). ATP is bound at residue 32-39 (GHSGAGKT). Positions 289 to 355 (AISIRNLLPV…VKAVSVDRAA (67 aa)) constitute a Mop domain.

Belongs to the ABC transporter superfamily. Molybdate importer (TC 3.A.1.8) family. The complex is composed of two ATP-binding proteins (ModC), two transmembrane proteins (ModB) and a solute-binding protein (ModA).

It localises to the cell inner membrane. The enzyme catalyses molybdate(out) + ATP + H2O = molybdate(in) + ADP + phosphate + H(+). Its function is as follows. Part of the ABC transporter complex ModABC involved in molybdenum import. Responsible for energy coupling to the transport system. This chain is Molybdenum import ATP-binding protein ModC, found in Brucella suis biovar 1 (strain 1330).